A 452-amino-acid chain; its full sequence is Elongation factor Tu, mitochondrial (452 aa).

Residues 1–43 (MAAATLLRATPLFSGLGAGPAPLLQGLLRPLKAQALPVLCRGL) constitute a mitochondrion transit peptide. One can recognise a tr-type G domain in the interval 55 to 251 (KPHVNVGTIG…AVDTYIPVPT (197 aa)). The segment at 64–71 (GHVDHGKT) is G1. GTP-binding residues include D67, G69, K70, T71, and T72. T71 contacts Mg(2+). K79 carries the post-translational modification N6-acetyllysine. Residue K88 is modified to N6-acetyllysine; alternate. K88 is subject to N6-succinyllysine; alternate. A G2 region spans residues 105-109 (GITIN). Positions 126–129 (DCPG) are G3. N181, D184, S219, A220, and L221 together coordinate GTP. Residues 181 to 184 (NKAD) form a G4 region. Residues 219-221 (SAL) are G5. K234 is modified (N6-succinyllysine). K256 bears the N6-acetyllysine mark. Residue T278 is modified to Phosphothreonine. K286 carries the N6-succinyllysine modification. S312 bears the Phosphoserine mark. An N6-acetyllysine mark is found at K361 and K418.

This sequence belongs to the TRAFAC class translation factor GTPase superfamily. Classic translation factor GTPase family. EF-Tu/EF-1A subfamily. As to quaternary structure, interacts with NLRX1. Interacts with ATG16L1.

It localises to the mitochondrion. It catalyses the reaction GTP + H2O = GDP + phosphate + H(+). Its function is as follows. GTP hydrolase that promotes the GTP-dependent binding of aminoacyl-tRNA to the A-site of ribosomes during protein biosynthesis. Also plays a role in the regulation of autophagy and innate immunity. Recruits ATG5-ATG12 and NLRX1 at mitochondria and serves as a checkpoint of the RIGI-MAVS pathway. In turn, inhibits RLR-mediated type I interferon while promoting autophagy. In Bos taurus (Bovine), this protein is Elongation factor Tu, mitochondrial (TUFM).